A 297-amino-acid chain; its full sequence is HTH-type transcriptional regulator PerR (297 aa).

The 58-residue stretch at A7–T64 folds into the HTH lysR-type domain. Positions F24–K44 form a DNA-binding region, H-T-H motif.

The protein belongs to the LysR transcriptional regulatory family.

Its function is as follows. Apparent regulatory gene involved in peroxide resistance in stationary phase. This Escherichia coli (strain K12) protein is HTH-type transcriptional regulator PerR (perR).